The sequence spans 726 residues: Catalase-peroxidase (726 aa).

The interval 1 to 33 (MSTSDDIHNTTATGKCPFHQGGHDQSAGAGTTT) is disordered. The segment at residues 105-226 (WHGAGTYRSI…LGATEMGLIY (122 aa)) is a cross-link (tryptophyl-tyrosyl-methioninium (Trp-Tyr) (with M-252)). Histidine 106 serves as the catalytic Proton acceptor. The tryptophyl-tyrosyl-methioninium (Tyr-Met) (with W-105) cross-link spans 226–252 (YVNPEGPDHSGEPLSAAAAIRATFGNM). Heme b is bound at residue histidine 267.

This sequence belongs to the peroxidase family. Peroxidase/catalase subfamily. In terms of assembly, homodimer or homotetramer. Heme b is required as a cofactor. In terms of processing, formation of the three residue Trp-Tyr-Met cross-link is important for the catalase, but not the peroxidase activity of the enzyme.

It carries out the reaction H2O2 + AH2 = A + 2 H2O. It catalyses the reaction 2 H2O2 = O2 + 2 H2O. In terms of biological role, bifunctional enzyme with both catalase and broad-spectrum peroxidase activity. In Shigella flexneri, this protein is Catalase-peroxidase.